The sequence spans 256 residues: Deoxyribose-phosphate aldolase (256 aa).

The Proton donor/acceptor role is filled by Asp-102. Lys-165 functions as the Schiff-base intermediate with acetaldehyde in the catalytic mechanism. Lys-197 functions as the Proton donor/acceptor in the catalytic mechanism.

It belongs to the DeoC/FbaB aldolase family. DeoC type 2 subfamily.

The protein localises to the cytoplasm. It catalyses the reaction 2-deoxy-D-ribose 5-phosphate = D-glyceraldehyde 3-phosphate + acetaldehyde. The protein operates within carbohydrate degradation; 2-deoxy-D-ribose 1-phosphate degradation; D-glyceraldehyde 3-phosphate and acetaldehyde from 2-deoxy-alpha-D-ribose 1-phosphate: step 2/2. Functionally, catalyzes a reversible aldol reaction between acetaldehyde and D-glyceraldehyde 3-phosphate to generate 2-deoxy-D-ribose 5-phosphate. This chain is Deoxyribose-phosphate aldolase, found in Shewanella sp. (strain MR-7).